A 296-amino-acid polypeptide reads, in one-letter code: tRNA dimethylallyltransferase (296 aa).

Gly-9–Thr-16 is a binding site for ATP. Thr-11–Thr-16 serves as a coordination point for substrate. Positions Asp-34 to Gln-37 are interaction with substrate tRNA.

Belongs to the IPP transferase family. As to quaternary structure, monomer. Mg(2+) serves as cofactor.

The catalysed reaction is adenosine(37) in tRNA + dimethylallyl diphosphate = N(6)-dimethylallyladenosine(37) in tRNA + diphosphate. Functionally, catalyzes the transfer of a dimethylallyl group onto the adenine at position 37 in tRNAs that read codons beginning with uridine, leading to the formation of N6-(dimethylallyl)adenosine (i(6)A). In Chloroflexus aggregans (strain MD-66 / DSM 9485), this protein is tRNA dimethylallyltransferase.